Consider the following 200-residue polypeptide: 3-isopropylmalate dehydratase small subunit (200 aa).

This sequence belongs to the LeuD family. LeuD type 1 subfamily. Heterodimer of LeuC and LeuD.

It catalyses the reaction (2R,3S)-3-isopropylmalate = (2S)-2-isopropylmalate. It participates in amino-acid biosynthesis; L-leucine biosynthesis; L-leucine from 3-methyl-2-oxobutanoate: step 2/4. In terms of biological role, catalyzes the isomerization between 2-isopropylmalate and 3-isopropylmalate, via the formation of 2-isopropylmaleate. In Haemophilus influenzae (strain ATCC 51907 / DSM 11121 / KW20 / Rd), this protein is 3-isopropylmalate dehydratase small subunit (leuD).